The primary structure comprises 287 residues: Short-chain dehydrogenase virD (287 aa).

Residues Val10, Thr36, Asp57, Asn85, Tyr149, Lys153, Val182, and Thr184 each contribute to the NADP(+) site. Tyr149 acts as the Proton acceptor in catalysis. Lys153 (lowers pKa of active site Tyr) is an active-site residue.

This sequence belongs to the short-chain dehydrogenases/reductases (SDR) family.

The protein operates within secondary metabolite biosynthesis. In terms of biological role, short-chain dehydrogenase; part of the gene cluster that mediates the biosynthesis of virensols and trichoxide, fungal natural products that contain or are derived from a salicylaldehyde core. The pathway begins with the synthesis of the reduced chain in virensol C by the highly reducing polyketide synthase virA via condensation of one acetate and 8 malonate units. VirA has interesting programming rules since the first 2 ketides are fully reduced, the 3 following ketides undergo beta-dehydration, and the last 3 ketides are only reduced to beta-hydroxys to yield the trihydroxy portion. The production of aldehyde virensol C by virA alone is surprising, since virA does not contain a reductase (R) domain that is typically associated with reductive product release in HRPKS. The cupin-domain enzyme virC is involved in enhancing virA product turnover. The short-chain dehydrogenase virB then oxidizes the C-7 alcohol of virensol C to a ketone, yielding virensol D. Virensol D is further transformed to salicylaldehyde 5-deoxyaurocitrin by the short-chain dehydrogenase virD. VirD catalyzes the dehydrogenation of C-3 to form the beta-ketone aldehyde, which is followed by the generation of the nucleophilic C-2 that is required for the intramolecular aldol condensation between C-2 and C-7, itself followed by dehydration and aromatization which leads to salicylaldehyde 5-deoxyaurocitrin. While the dehydrogenation of virensol D is definitely catalyzed by virD, the aldol condensation and dehydration may be uncatalyzed or assisted by virD. The short chain dehydrogenase virG then converts salicylaldehyde 5-deoxyaurocitrin into virensol B which is further hydroxylated by the cytochrome P450 monooxygenase virE to yield the hydroquinone virensol A. VirI then may oxidize virensol A to form the quinone, while virH performs the epoxidation. Finally, the two remaining short-chain dehydrogenases, virK and virL, are probably responsible for reducing the ketones to the corresponding alcohols to furnish the epoxycyclohexanol structure in trichoxide. The chain is Short-chain dehydrogenase virD from Hypocrea virens (strain Gv29-8 / FGSC 10586) (Gliocladium virens).